A 122-amino-acid chain; its full sequence is N(2)-fixation sustaining protein CowN (122 aa).

This sequence belongs to the CowN family.

Its function is as follows. Is required to sustain N(2)-dependent growth in the presence of low levels of carbon monoxide (CO). Probably acts by protecting the N(2) fixation ability of the nitrogenase complex, which is inactivated in the presence of CO. The protein is N(2)-fixation sustaining protein CowN of Azorhizobium caulinodans (strain ATCC 43989 / DSM 5975 / JCM 20966 / LMG 6465 / NBRC 14845 / NCIMB 13405 / ORS 571).